A 120-amino-acid polypeptide reads, in one-letter code: Aspartate 1-decarboxylase (120 aa).

Residue Ser-25 is the Schiff-base intermediate with substrate; via pyruvic acid of the active site. Ser-25 is subject to Pyruvic acid (Ser). Thr-57 lines the substrate pocket. Tyr-58 functions as the Proton donor in the catalytic mechanism. Substrate is bound at residue 73–75; it reads GAA.

Belongs to the PanD family. As to quaternary structure, heterooctamer of four alpha and four beta subunits. The cofactor is pyruvate. Post-translationally, is synthesized initially as an inactive proenzyme, which is activated by self-cleavage at a specific serine bond to produce a beta-subunit with a hydroxyl group at its C-terminus and an alpha-subunit with a pyruvoyl group at its N-terminus.

It localises to the cytoplasm. The enzyme catalyses L-aspartate + H(+) = beta-alanine + CO2. Its pathway is cofactor biosynthesis; (R)-pantothenate biosynthesis; beta-alanine from L-aspartate: step 1/1. In terms of biological role, catalyzes the pyruvoyl-dependent decarboxylation of aspartate to produce beta-alanine. The sequence is that of Aspartate 1-decarboxylase from Cupriavidus taiwanensis (strain DSM 17343 / BCRC 17206 / CCUG 44338 / CIP 107171 / LMG 19424 / R1) (Ralstonia taiwanensis (strain LMG 19424)).